The sequence spans 157 residues: Phosphopantetheine adenylyltransferase (157 aa).

Residue serine 9 coordinates substrate. Residues 9–10 (SF) and histidine 17 each bind ATP. Lysine 41, leucine 73, and lysine 87 together coordinate substrate. ATP contacts are provided by residues 88–90 (GLR), glutamate 98, and 123–129 (YSFLSSS).

This sequence belongs to the bacterial CoaD family. Homohexamer. It depends on Mg(2+) as a cofactor.

It is found in the cytoplasm. It carries out the reaction (R)-4'-phosphopantetheine + ATP + H(+) = 3'-dephospho-CoA + diphosphate. Its pathway is cofactor biosynthesis; coenzyme A biosynthesis; CoA from (R)-pantothenate: step 4/5. Its function is as follows. Reversibly transfers an adenylyl group from ATP to 4'-phosphopantetheine, yielding dephospho-CoA (dPCoA) and pyrophosphate. The protein is Phosphopantetheine adenylyltransferase of Alkaliphilus oremlandii (strain OhILAs) (Clostridium oremlandii (strain OhILAs)).